Consider the following 243-residue polypeptide: Triosephosphate isomerase (243 aa).

Residue 9-11 (NWK) participates in substrate binding. Residue His96 is the Electrophile of the active site. The active-site Proton acceptor is Glu165. Residues Gly171, Ser204, and 225 to 226 (GG) each bind substrate.

Belongs to the triosephosphate isomerase family. Homodimer.

Its subcellular location is the cytoplasm. The enzyme catalyses D-glyceraldehyde 3-phosphate = dihydroxyacetone phosphate. The protein operates within carbohydrate biosynthesis; gluconeogenesis. It functions in the pathway carbohydrate degradation; glycolysis; D-glyceraldehyde 3-phosphate from glycerone phosphate: step 1/1. Its function is as follows. Involved in the gluconeogenesis. Catalyzes stereospecifically the conversion of dihydroxyacetone phosphate (DHAP) to D-glyceraldehyde-3-phosphate (G3P). The chain is Triosephosphate isomerase from Prochlorococcus marinus (strain SARG / CCMP1375 / SS120).